The chain runs to 1902 residues: Putative surface cell antigen sca1 (1902 aa).

The N-terminal stretch at 1–28 (MNKLTEQHLLKKSRFLKYSLLASISVGA) is a signal peptide. Disordered regions lie at residues 140–273 (GIEK…TFVP), 420–485 (QGVF…SRTA), 707–729 (TTTTDESLRSDNNWKNSAPYSSS), 858–885 (NRRRKRDGETSKQRTVDQEGEFGHAWGN), and 1470–1548 (KSES…SDGD). Composition is skewed to polar residues over residues 146–159 (QSQNTYTPESTEQM) and 168–197 (TASSPTVSPASNSFITAPNTPNTTLTSPEH). Positions 199-212 (TTAPGTPSSTPATP) are enriched in low complexity. Over residues 225 to 238 (LGANTPPNINTNSK) the composition is skewed to polar residues. Positions 246–264 (SSSGPQQQAVQSSSQVKSE) are enriched in low complexity. Residues 423–439 (FNKNKSSGGNARKSSAG) show a composition bias toward polar residues. The segment covering 445 to 482 (KKQEAQKQLSEIKKQEKAIKTASDKAKEVAASAKKETS) has biased composition (basic and acidic residues). The segment covering 863–874 (RDGETSKQRTVD) has biased composition (basic and acidic residues). Residues 1491-1507 (LSSLPALASSNESALAL) show a composition bias toward low complexity. Acidic residues predominate over residues 1521–1538 (SSEDEESYDSGFEEEEET). One can recognise an Autotransporter domain in the interval 1618–1902 (ESHIKRGLWM…QGSVKLKVNL (285 aa)).

Its subcellular location is the cell outer membrane. This is Putative surface cell antigen sca1 (sca1) from Rickettsia conorii (strain ATCC VR-613 / Malish 7).